Consider the following 224-residue polypeptide: MSIRSWPREERPRERLIQRGPQALSDAELLAIFLRTGRRGQSAVELARELLAAFSGLRGLLEADRETFAARPGLGDAKYAQMQAALEIARRHLGEQLQRGPTLSSPAQTRTYLAALLRDHPSEVFGGLFLDNRHRVIGFEELFRGTINGASVYPRELVRRALAHNAAAVIVAHNHPSGITEPSAADEALTHRLREALGLVDVRLLDHFVVGDGEPVSLAERGVL.

In terms of domain architecture, MPN spans 102–224 (TLSSPAQTRT…PVSLAERGVL (123 aa)). Zn(2+) is bound by residues His-173, His-175, and Asp-186. A JAMM motif motif is present at residues 173–186 (HNHPSGITEPSAAD).

This sequence belongs to the UPF0758 family.

The chain is UPF0758 protein Hhal_2301 from Halorhodospira halophila (strain DSM 244 / SL1) (Ectothiorhodospira halophila (strain DSM 244 / SL1)).